Reading from the N-terminus, the 462-residue chain is uncharacterized protein (462 aa).

Residues 12–70 (MLKKNDIIQVAISDLSHEGAGVAKHDGFVFFVDNALPEEVIDMRVLKVNKNSGFGKVEA) form the TRAM domain. Gln-294, Tyr-323, Glu-344, and Asp-392 together coordinate S-adenosyl-L-methionine. Catalysis depends on Cys-419, which acts as the Nucleophile.

It belongs to the class I-like SAM-binding methyltransferase superfamily. RNA M5U methyltransferase family.

This is an uncharacterized protein from Streptococcus pyogenes serotype M3 (strain ATCC BAA-595 / MGAS315).